Here is a 251-residue protein sequence, read N- to C-terminus: uncharacterized protein (251 aa).

Residues 1–18 (MKILIILSIILCSLFGRA) form the signal peptide.

Belongs to the MlaA family.

This is an uncharacterized protein from Rickettsia prowazekii (strain Madrid E).